Reading from the N-terminus, the 1233-residue chain is Glutamate receptor ionotropic, NMDA 2C (1233 aa).

Positions Met-1 to Ala-19 are cleaved as a signal peptide. The Extracellular segment spans residues Gly-20–Ala-554. Residues Asn-70 and Asn-73 are each glycosylated (N-linked (GlcNAc...) asparagine). An intrachain disulfide couples Cys-82 to Cys-317. Asn-337 and Asn-438 each carry an N-linked (GlcNAc...) asparagine glycan. 2 disulfides stabilise this stretch: Cys-426–Cys-453 and Cys-433–Cys-454. L-glutamate contacts are provided by Ser-509, Thr-511, and Arg-516. Residue Asn-539 is glycosylated (N-linked (GlcNAc...) asparagine). The helical transmembrane segment at Val-555–Glu-575 threads the bilayer. The Cytoplasmic portion of the chain corresponds to Tyr-576–Thr-598. The discontinuously helical intramembrane region spans Ile-599–Phe-611. The pore-forming stretch occupies residues Lys-601–Pro-620. The Cytoplasmic portion of the chain corresponds to Asn-612–Lys-626. The chain crosses the membrane as a helical span at residues Ile-627 to Thr-644. Over Ala-645 to Asp-813 the chain is Extracellular. Asn-685 is a glycosylation site (N-linked (GlcNAc...) asparagine). 3 residues coordinate L-glutamate: Ser-687, Thr-688, and Asp-729. Cysteines 743 and 798 form a disulfide. Residues Asn-814–Glu-836 form a helical membrane-spanning segment. Topologically, residues His-837–Val-1233 are cytoplasmic. Ser-875, Ser-881, and Ser-912 each carry phosphoserine. A disordered region spans residues Ile-920 to Val-994. Pro residues-rich tracts occupy residues Ala-929–Ser-956 and Pro-975–Pro-987. The PDZ-binding motif lies at Ser-1231–Val-1233.

The protein belongs to the glutamate-gated ion channel (TC 1.A.10.1) family. NR2C/GRIN2C subfamily. In terms of assembly, heterotetramer. Forms heterotetrameric channels composed of two GluN1/zeta subunits (GRIN1), and two identical GluN2/epsilon subunits (GRIN2A, GRIN2B, GRIN2C or GRIN2D) or GluN3 subunits (GRIN3A or GRIN3B) (in vitro). In vivo, the subunit composition may depend on the expression levels of the different subunits. Interacts with PDZ domains of PATJ and DLG4. Interacts (via PDZ-binding motif) with SNX27 (via PDZ domain); the interaction is required for recycling to the plasma membrane when endocytosed and prevent degradation in lysosomes. Mainly expressed in brain with predominant expression is in the cerebellum, also present in the hippocampus, amygdala, caudate nucleus, corpus callosum, subthalamic nuclei and thalamus. Detected in the heart, skeletal muscle and pancreas.

The protein localises to the cell membrane. Its subcellular location is the postsynaptic cell membrane. The catalysed reaction is Ca(2+)(in) = Ca(2+)(out). The enzyme catalyses Na(+)(in) = Na(+)(out). It carries out the reaction K(+)(in) = K(+)(out). Functionally, component of N-methyl-D-aspartate (NMDA) receptors (NMDARs) that function as heterotetrameric, ligand-gated cation channels with high calcium permeability and voltage-dependent block by Mg(2+). Participates in synaptic plasticity for learning and memory formation by contributing to the slow phase of excitatory postsynaptic current and long-term synaptic potentiation. Channel activation requires binding of the neurotransmitter L-glutamate to the GluN2 subunit, glycine or D-serine binding to the GluN1 subunit, plus membrane depolarization to eliminate channel inhibition by Mg(2+). NMDARs mediate simultaneously the potasium efflux and the influx of calcium and sodium. Each GluN2 subunit confers differential attributes to channel properties, including activation, deactivation and desensitization kinetics, pH sensitivity, Ca2(+) permeability, and binding to allosteric modulators. The polypeptide is Glutamate receptor ionotropic, NMDA 2C (Homo sapiens (Human)).